Here is a 429-residue protein sequence, read N- to C-terminus: Adenylosuccinate synthetase (429 aa).

GTP contacts are provided by residues 12–18 (GDEGKGK) and 40–42 (GHT). D13 serves as the catalytic Proton acceptor. Residues D13 and G40 each coordinate Mg(2+). Residues 13–16 (DEGK), 38–41 (NAGH), T129, R143, Q223, T238, and R302 each bind IMP. H41 serves as the catalytic Proton donor. Residue 298-304 (TVTGRAR) participates in substrate binding. Residues R304, 330–332 (KLD), and 412–414 (STS) contribute to the GTP site.

It belongs to the adenylosuccinate synthetase family. As to quaternary structure, homodimer. Mg(2+) is required as a cofactor.

It localises to the cytoplasm. It carries out the reaction IMP + L-aspartate + GTP = N(6)-(1,2-dicarboxyethyl)-AMP + GDP + phosphate + 2 H(+). The protein operates within purine metabolism; AMP biosynthesis via de novo pathway; AMP from IMP: step 1/2. In terms of biological role, plays an important role in the de novo pathway of purine nucleotide biosynthesis. Catalyzes the first committed step in the biosynthesis of AMP from IMP. The sequence is that of Adenylosuccinate synthetase from Acidiphilium cryptum (strain JF-5).